A 296-amino-acid polypeptide reads, in one-letter code: MLNRFSYSSNAWHNLRVDGPDADGIAVIVLARSQSRNALTLPMLTDMIQLLSAMDADDSVKCIVFTGEGQFFCSGVDLTEGFGEIGKTRDTHRDAGGKLALAIHNCCKPTIAAINGTAVGVGITMTLPMSIRIAAKTAKISFPFVRREIVADAASSFYLPRLIGYGRALHLFTTGALYSAESGLLHGLFSETVNSASSTLPRALEVARDIAINTSQVGGCLTRDLIYRSSQSPEQAHLLESAILYTRYQSRDFKEGVKSFLEKRKPRFQDTMREQSGEGVLERGDCVVGLASKPKL.

A Peroxisomal targeting signal type 1 motif is present at residues 294–296; the sequence is PKL.

The protein belongs to the enoyl-CoA hydratase/isomerase family.

It localises to the peroxisome. The catalysed reaction is a (3S)-3-hydroxyacyl-CoA = a (2E)-enoyl-CoA + H2O. It catalyses the reaction a 4-saturated-(3S)-3-hydroxyacyl-CoA = a (3E)-enoyl-CoA + H2O. Its pathway is mycotoxin biosynthesis. In terms of biological role, enoyl-CoA hydratase; part of the gene clusters that mediate the biosynthesis of the host-selective toxins (HSTs) AK-toxins responsible for Japanese pear black spot disease by the Japanese pear pathotype. AK-toxins are esters of 9,10-epoxy 8-hydroxy 9-methyldecatrienoic acid (EDA). On cellular level, AK-toxins affect plasma membrane of susceptible cells and cause a sudden increase in loss of K(+) after a few minutes of toxin treatment. The acyl-CoA ligase AKT1, the hydrolase AKT2 and enoyl-CoA hydratase AKT3 are all involved in the biosynthesis of the AK-, AF- and ACT-toxin common 9,10-epoxy-8-hydroxy-9-methyl-decatrienoic acid (EDA) structural moiety. Part of the EDA biosynthesis occurs in the peroxisome since these 3 enzymes are localized in peroxisomes. The exact roles of the 3 enzymes, as well as of additional AK-toxin clusters enzymes, including AKT4, AKT6 and AKTS1, have still to be elucidated. The Cytochrome P450 monooxygenase AKT7 on the other side functions to limit production of EDA and AK-toxin, probably via the catalysis of a side reaction of EDA or its precursor. In Alternaria alternata (Alternaria rot fungus), this protein is Enoyl-CoA hydratase AKT3-2.